The chain runs to 434 residues: UDP-N-acetylmuramoyl-L-alanyl-D-glutamate--2,6-diaminopimelate ligase (434 aa).

Ser-17 lines the UDP-N-acetyl-alpha-D-muramoyl-L-alanyl-D-glutamate pocket. Residue 68–74 (GTNGKTT) coordinates ATP. UDP-N-acetyl-alpha-D-muramoyl-L-alanyl-D-glutamate-binding positions include 111–112 (TT), Ser-138, Gln-144, and Arg-146. Lys-178 carries the N6-carboxylysine modification. Meso-2,6-diaminopimelate-binding positions include Arg-326, 350 to 353 (DNPR), Gly-401, and Glu-405. Positions 350–353 (DNPR) match the Meso-diaminopimelate recognition motif motif.

It belongs to the MurCDEF family. MurE subfamily. It depends on Mg(2+) as a cofactor. Post-translationally, carboxylation is probably crucial for Mg(2+) binding and, consequently, for the gamma-phosphate positioning of ATP.

The protein localises to the cytoplasm. The enzyme catalyses UDP-N-acetyl-alpha-D-muramoyl-L-alanyl-D-glutamate + meso-2,6-diaminopimelate + ATP = UDP-N-acetyl-alpha-D-muramoyl-L-alanyl-gamma-D-glutamyl-meso-2,6-diaminopimelate + ADP + phosphate + H(+). The protein operates within cell wall biogenesis; peptidoglycan biosynthesis. Catalyzes the addition of meso-diaminopimelic acid to the nucleotide precursor UDP-N-acetylmuramoyl-L-alanyl-D-glutamate (UMAG) in the biosynthesis of bacterial cell-wall peptidoglycan. The sequence is that of UDP-N-acetylmuramoyl-L-alanyl-D-glutamate--2,6-diaminopimelate ligase from Wolinella succinogenes (strain ATCC 29543 / DSM 1740 / CCUG 13145 / JCM 31913 / LMG 7466 / NCTC 11488 / FDC 602W) (Vibrio succinogenes).